We begin with the raw amino-acid sequence, 239 residues long: Ion-translocating oxidoreductase complex subunit E (239 aa).

5 helical membrane-spanning segments follow: residues 41–61 (LGLGLATLLVLVCSNAAVSLV), 71–91 (LPAFVMIIAALTTCIELLMQA), 95–115 (ELYQILGIFIPLITTNCVILG), 130–150 (SFDGLLTGLGFALVLLVLGGL), and 184–204 (GFLLAILPPGAFIMLGLLIAL).

It belongs to the NqrDE/RnfAE family. In terms of assembly, the complex is composed of six subunits: RnfA, RnfB, RnfC, RnfD, RnfE and RnfG.

Its subcellular location is the cell inner membrane. Its function is as follows. Part of a membrane-bound complex that couples electron transfer with translocation of ions across the membrane. This chain is Ion-translocating oxidoreductase complex subunit E, found in Pseudomonas paraeruginosa (strain DSM 24068 / PA7) (Pseudomonas aeruginosa (strain PA7)).